The primary structure comprises 213 residues: Thiamine-phosphate synthase (213 aa).

4-amino-2-methyl-5-(diphosphooxymethyl)pyrimidine-binding positions include 43 to 47 (QLRDK) and Asn-74. 2 residues coordinate Mg(2+): Asp-75 and Asp-94. Ser-113 provides a ligand contact to 4-amino-2-methyl-5-(diphosphooxymethyl)pyrimidine. 2-[(2R,5Z)-2-carboxy-4-methylthiazol-5(2H)-ylidene]ethyl phosphate is bound at residue 142-144 (TAT). 4-amino-2-methyl-5-(diphosphooxymethyl)pyrimidine is bound at residue Lys-145. Residues Gly-173 and 193-194 (VS) each bind 2-[(2R,5Z)-2-carboxy-4-methylthiazol-5(2H)-ylidene]ethyl phosphate.

It belongs to the thiamine-phosphate synthase family. The cofactor is Mg(2+).

It catalyses the reaction 2-[(2R,5Z)-2-carboxy-4-methylthiazol-5(2H)-ylidene]ethyl phosphate + 4-amino-2-methyl-5-(diphosphooxymethyl)pyrimidine + 2 H(+) = thiamine phosphate + CO2 + diphosphate. It carries out the reaction 2-(2-carboxy-4-methylthiazol-5-yl)ethyl phosphate + 4-amino-2-methyl-5-(diphosphooxymethyl)pyrimidine + 2 H(+) = thiamine phosphate + CO2 + diphosphate. The catalysed reaction is 4-methyl-5-(2-phosphooxyethyl)-thiazole + 4-amino-2-methyl-5-(diphosphooxymethyl)pyrimidine + H(+) = thiamine phosphate + diphosphate. It participates in cofactor biosynthesis; thiamine diphosphate biosynthesis; thiamine phosphate from 4-amino-2-methyl-5-diphosphomethylpyrimidine and 4-methyl-5-(2-phosphoethyl)-thiazole: step 1/1. Condenses 4-methyl-5-(beta-hydroxyethyl)thiazole monophosphate (THZ-P) and 2-methyl-4-amino-5-hydroxymethyl pyrimidine pyrophosphate (HMP-PP) to form thiamine monophosphate (TMP). This chain is Thiamine-phosphate synthase, found in Psychrobacter sp. (strain PRwf-1).